A 452-amino-acid chain; its full sequence is Trigger factor (452 aa).

The PPIase FKBP-type domain maps to D170–P256.

The protein belongs to the FKBP-type PPIase family. Tig subfamily.

The protein resides in the cytoplasm. The enzyme catalyses [protein]-peptidylproline (omega=180) = [protein]-peptidylproline (omega=0). Functionally, involved in protein export. Acts as a chaperone by maintaining the newly synthesized protein in an open conformation. Functions as a peptidyl-prolyl cis-trans isomerase. In Borreliella afzelii (strain PKo) (Borrelia afzelii), this protein is Trigger factor.